Reading from the N-terminus, the 226-residue chain is ATP synthase F(0) complex subunit a (226 aa).

Transmembrane regions (helical) follow at residues 6–26 (FATFITPTILGITTLPIIMLF), 68–88 (WALMLMSLILFIASTNLLGLL), 97–117 (QLSMNIGMAIPLWLATVLMGF), 138–158 (VPMLIIIETISLFIQPVALAV), 164–184 (ITAGHLLIHLIGSATLALCSI), and 193–213 (FIILFLLTILELAVAMIQAYV).

The protein belongs to the ATPase A chain family. In terms of assembly, component of the ATP synthase complex composed at least of ATP5F1A/subunit alpha, ATP5F1B/subunit beta, ATP5MC1/subunit c (homooctomer), MT-ATP6/subunit a, MT-ATP8/subunit 8, ATP5ME/subunit e, ATP5MF/subunit f, ATP5MG/subunit g, ATP5MK/subunit k, ATP5MJ/subunit j, ATP5F1C/subunit gamma, ATP5F1D/subunit delta, ATP5F1E/subunit epsilon, ATP5PF/subunit F6, ATP5PB/subunit b, ATP5PD/subunit d, ATP5PO/subunit OSCP. ATP synthase complex consists of a soluble F(1) head domain (subunits alpha(3) and beta(3)) - the catalytic core - and a membrane F(0) domain - the membrane proton channel (subunits c, a, 8, e, f, g, k and j). These two domains are linked by a central stalk (subunits gamma, delta, and epsilon) rotating inside the F1 region and a stationary peripheral stalk (subunits F6, b, d, and OSCP). Interacts with DNAJC30; interaction is direct.

It localises to the mitochondrion inner membrane. The enzyme catalyses H(+)(in) = H(+)(out). Functionally, subunit a, of the mitochondrial membrane ATP synthase complex (F(1)F(0) ATP synthase or Complex V) that produces ATP from ADP in the presence of a proton gradient across the membrane which is generated by electron transport complexes of the respiratory chain. ATP synthase complex consist of a soluble F(1) head domain - the catalytic core - and a membrane F(1) domain - the membrane proton channel. These two domains are linked by a central stalk rotating inside the F(1) region and a stationary peripheral stalk. During catalysis, ATP synthesis in the catalytic domain of F(1) is coupled via a rotary mechanism of the central stalk subunits to proton translocation. With the subunit c (ATP5MC1), forms the proton-conducting channel in the F(0) domain, that contains two crucial half-channels (inlet and outlet) that facilitate proton movement from the mitochondrial intermembrane space (IMS) into the matrix. Protons are taken up via the inlet half-channel and released through the outlet half-channel, following a Grotthuss mechanism. The polypeptide is ATP synthase F(0) complex subunit a (Osphranter robustus (Wallaroo)).